Here is a 96-residue protein sequence, read N- to C-terminus: uncharacterized protein (96 aa).

The next 2 membrane-spanning stretches (helical) occupy residues 27-47 (LAFRISELFLIFSIPLFALLI) and 50-70 (LSGVNRVLMFFILVYYISIVF).

Its subcellular location is the cell membrane. This is an uncharacterized protein from Haemophilus influenzae (strain ATCC 51907 / DSM 11121 / KW20 / Rd).